A 137-amino-acid polypeptide reads, in one-letter code: ATP synthase epsilon chain (137 aa).

Belongs to the ATPase epsilon chain family. As to quaternary structure, F-type ATPases have 2 components, CF(1) - the catalytic core - and CF(0) - the membrane proton channel. CF(1) has five subunits: alpha(3), beta(3), gamma(1), delta(1), epsilon(1). CF(0) has three main subunits: a, b and c.

The protein localises to the cell membrane. Its function is as follows. Produces ATP from ADP in the presence of a proton gradient across the membrane. In Syntrophomonas wolfei subsp. wolfei (strain DSM 2245B / Goettingen), this protein is ATP synthase epsilon chain.